The primary structure comprises 423 residues: tRNA(Met) cytidine acetate ligase (423 aa).

Residues 7-20 (VVEY…HLYH), Gly-102, Asn-165, and Arg-190 each bind ATP.

It belongs to the TmcAL family.

It is found in the cytoplasm. It catalyses the reaction cytidine(34) in elongator tRNA(Met) + acetate + ATP = N(4)-acetylcytidine(34) in elongator tRNA(Met) + AMP + diphosphate. Functionally, catalyzes the formation of N(4)-acetylcytidine (ac(4)C) at the wobble position of elongator tRNA(Met), using acetate and ATP as substrates. First activates an acetate ion to form acetyladenylate (Ac-AMP) and then transfers the acetyl group to tRNA to form ac(4)C34. This chain is tRNA(Met) cytidine acetate ligase, found in Thermosipho africanus (strain TCF52B).